The sequence spans 388 residues: Pepsin A-1 (388 aa).

The signal sequence occupies residues 1–15 (MKWLLLLGLVALSEC). Propeptides (activation peptide) lie at residues 16–40 (IIYKVPLVRKKSLRRNLSEHGLLKD) and 41–62 (FLKKHNLNPASKYFPQAEAPTL). Residues 76–385 (YFGTIGIGTP…DRANNQVGLA (310 aa)) form the Peptidase A1 domain. Residue aspartate 94 is part of the active site. The cysteines at positions 107 and 112 are disulfide-linked. A Phosphoserine modification is found at serine 130. A disulfide bridge links cysteine 268 with cysteine 272. Aspartate 277 is a catalytic residue. A disulfide bridge links cysteine 311 with cysteine 344.

Belongs to the peptidase A1 family. Each pepsinogen is converted to corresponding pepsin at pH 2.0 in part as a result of the release of a 47 AA activation segment and in part as a result of stepwise proteolytic cleavage via an intermediate form(s).

Its subcellular location is the secreted. The catalysed reaction is Preferential cleavage: hydrophobic, preferably aromatic, residues in P1 and P1' positions. Cleaves 1-Phe-|-Val-2, 4-Gln-|-His-5, 13-Glu-|-Ala-14, 14-Ala-|-Leu-15, 15-Leu-|-Tyr-16, 16-Tyr-|-Leu-17, 23-Gly-|-Phe-24, 24-Phe-|-Phe-25 and 25-Phe-|-Tyr-26 bonds in the B chain of insulin.. Shows particularly broad specificity; although bonds involving phenylalanine and leucine are preferred, many others are also cleaved to some extent. The sequence is that of Pepsin A-1 (PGA) from Macaca fuscata fuscata (Japanese macaque).